Here is a 297-residue protein sequence, read N- to C-terminus: uncharacterized protein (297 aa).

Disordered stretches follow at residues 19–133 (NEVD…EEKE), 147–214 (AEDD…VGIA), and 226–277 (EKTS…SKEA). A compositionally biased stretch (basic and acidic residues) spans 41–52 (EEPKNEKEKHDD). Residues 77–87 (PAEDDEEDEEF) are compositionally biased toward acidic residues. Residues 88-101 (PSQSYGPSIPSNFR) show a composition bias toward polar residues. 2 stretches are compositionally biased toward basic and acidic residues: residues 147 to 161 (AEDD…REEW) and 236 to 268 (IHQK…EVRG).

This is an uncharacterized protein from Caenorhabditis elegans.